The sequence spans 728 residues: Phosphoribosylformylglycinamidine synthase subunit PurL (728 aa).

His-42 is a catalytic residue. 2 residues coordinate ATP: Tyr-45 and Lys-84. Glu-86 is a binding site for Mg(2+). Substrate-binding positions include 87 to 90 (SHNH) and Arg-109. His-88 (proton acceptor) is an active-site residue. Asp-110 serves as a coordination point for Mg(2+). Substrate is bound at residue Gln-237. Mg(2+) is bound at residue Asp-265. 309 to 311 (ESQ) is a substrate binding site. The ATP site is built by Asp-491 and Gly-528. Asn-529 serves as a coordination point for Mg(2+). Ser-531 is a binding site for substrate.

Belongs to the FGAMS family. In terms of assembly, monomer. Part of the FGAM synthase complex composed of 1 PurL, 1 PurQ and 2 PurS subunits.

The protein localises to the cytoplasm. It catalyses the reaction N(2)-formyl-N(1)-(5-phospho-beta-D-ribosyl)glycinamide + L-glutamine + ATP + H2O = 2-formamido-N(1)-(5-O-phospho-beta-D-ribosyl)acetamidine + L-glutamate + ADP + phosphate + H(+). Its pathway is purine metabolism; IMP biosynthesis via de novo pathway; 5-amino-1-(5-phospho-D-ribosyl)imidazole from N(2)-formyl-N(1)-(5-phospho-D-ribosyl)glycinamide: step 1/2. Its function is as follows. Part of the phosphoribosylformylglycinamidine synthase complex involved in the purines biosynthetic pathway. Catalyzes the ATP-dependent conversion of formylglycinamide ribonucleotide (FGAR) and glutamine to yield formylglycinamidine ribonucleotide (FGAM) and glutamate. The FGAM synthase complex is composed of three subunits. PurQ produces an ammonia molecule by converting glutamine to glutamate. PurL transfers the ammonia molecule to FGAR to form FGAM in an ATP-dependent manner. PurS interacts with PurQ and PurL and is thought to assist in the transfer of the ammonia molecule from PurQ to PurL. This chain is Phosphoribosylformylglycinamidine synthase subunit PurL, found in Campylobacter jejuni subsp. jejuni serotype O:6 (strain 81116 / NCTC 11828).